A 250-amino-acid polypeptide reads, in one-letter code: NADH-quinone oxidoreductase subunit C (250 aa).

Belongs to the complex I 30 kDa subunit family. NDH-1 is composed of 14 different subunits. Subunits NuoB, C, D, E, F, and G constitute the peripheral sector of the complex.

It localises to the cell inner membrane. It catalyses the reaction a quinone + NADH + 5 H(+)(in) = a quinol + NAD(+) + 4 H(+)(out). Functionally, NDH-1 shuttles electrons from NADH, via FMN and iron-sulfur (Fe-S) centers, to quinones in the respiratory chain. The immediate electron acceptor for the enzyme in this species is believed to be ubiquinone. Couples the redox reaction to proton translocation (for every two electrons transferred, four hydrogen ions are translocated across the cytoplasmic membrane), and thus conserves the redox energy in a proton gradient. This chain is NADH-quinone oxidoreductase subunit C, found in Xylella fastidiosa (strain 9a5c).